The following is a 317-amino-acid chain: Olfactory receptor 2G2 (317 aa).

Over 1-28 the chain is Extracellular; it reads MGMVRHTNESNLAGFILLGFSDYPQLQK. Asparagine 8 is a glycosylation site (N-linked (GlcNAc...) asparagine). A helical membrane pass occupies residues 29 to 52; the sequence is VLFVLILILYLLTILGNTTIILVS. Over 53–60 the chain is Cytoplasmic; the sequence is RLEPKLHM. Residues 61 to 82 form a helical membrane-spanning segment; the sequence is PMYFFLSHLSFLYRCFTSSVIP. Residues 83 to 103 are Extracellular-facing; the sequence is QLLVNLWEPMKTIAYGGCLVH. Cysteine 100 and cysteine 192 form a disulfide bridge. The chain crosses the membrane as a helical span at residues 104–123; the sequence is LYNSHALGSTECVLPAVMSC. Over 124–142 the chain is Cytoplasmic; that stretch reads DRYVAVCRPLHYTVLMHIH. The helical transmembrane segment at 143-161 threads the bilayer; sequence LCMALASMAWLSGIATTLV. Residues 162–198 lie on the Extracellular side of the membrane; the sequence is QSTLTLQLPFCGHRQVDHFICEVPVLIKLACVGTTFN. Residues 199–222 form a helical membrane-spanning segment; it reads EAELFVASILFLIVPVSFILVSSG. Over 223 to 239 the chain is Cytoplasmic; it reads YIAHAVLRIKSATRRQK. A helical membrane pass occupies residues 240–262; it reads AFGTCFSHLTVVTIFYGTIIFMY. Topologically, residues 263-275 are extracellular; sequence LQPAKSRSRDQGK. The helical transmembrane segment at 276 to 295 threads the bilayer; it reads FVSLFYTVVTRMLNPLIYTL. Topologically, residues 296 to 317 are cytoplasmic; the sequence is RIKEVKGALKKVLAKALGVNIL.

Belongs to the G-protein coupled receptor 1 family.

It localises to the cell membrane. In terms of biological role, odorant receptor. This chain is Olfactory receptor 2G2 (OR2G2), found in Homo sapiens (Human).